The sequence spans 101 residues: Small ribosomal subunit protein uS14 (101 aa).

It belongs to the universal ribosomal protein uS14 family. As to quaternary structure, part of the 30S ribosomal subunit. Contacts proteins S3 and S10.

Functionally, binds 16S rRNA, required for the assembly of 30S particles and may also be responsible for determining the conformation of the 16S rRNA at the A site. This is Small ribosomal subunit protein uS14 from Proteus mirabilis (strain HI4320).